Consider the following 367-residue polypeptide: Aflatoxin B1 aldehyde reductase member 2 (367 aa).

The span at 1–31 (MLRAASRAVGRAAVRSAQRSGTSVGRPLAMS) shows a compositional bias: low complexity. The disordered stretch occupies residues 1 to 45 (MLRAASRAVGRAAVRSAQRSGTSVGRPLAMSRPPPPRAASGAPLR). A mitochondrion-targeting transit peptide spans 1 to 46 (MLRAASRAVGRAAVRSAQRSGTSVGRPLAMSRPPPPRAASGAPLRP). A Phosphoserine modification is found at serine 40. Position 48 is a phosphothreonine (threonine 48). Residue aspartate 80 participates in NADP(+) binding. The active-site Proton donor is tyrosine 85. Position 136 is an N6-acetyllysine (lysine 136). Residue histidine 149 coordinates substrate. NADP(+) contacts are provided by residues 179-180 (SN), glutamine 205, 234-244 (NPLAGGLLTGK), and arginine 258. Position 244 is an N6-succinyllysine (lysine 244). Residues tyrosine 268 and arginine 271 each coordinate substrate. NADP(+) is bound at residue 326 to 334 (SSLEQLEQN). Arginine 367 contacts substrate.

Belongs to the aldo/keto reductase family. Aldo/keto reductase 2 subfamily. In terms of assembly, homodimer. Expressed in liver, kidney, testis and brain with low levels in skeletal muscle, spleen, heart and lung.

The protein localises to the mitochondrion. It is found in the golgi apparatus. Its subcellular location is the cytoplasm. It catalyses the reaction 4-hydroxybutanoate + NADP(+) = succinate semialdehyde + NADPH + H(+). Its activity is regulated as follows. Inhibited by citrate, succinate and tartrate. In terms of biological role, catalyzes the NADPH-dependent reduction of succinic semialdehyde to gamma-hydroxybutyrate. May have an important role in producing the neuromodulator gamma-hydroxybutyrate (GHB). Has broad substrate specificity. Can reduce the dialdehyde protein-binding form of aflatoxin B1 (AFB1) to the non-binding AFB1 dialcohol. May be involved in protection of liver against the toxic and carcinogenic effects of AFB1, a potent hepatocarcinogen. The chain is Aflatoxin B1 aldehyde reductase member 2 from Mus musculus (Mouse).